The sequence spans 207 residues: Small ribosomal subunit protein uS4A (207 aa).

The S4 RNA-binding domain occupies 98–161 (RRLDNVVYRM…REHKRIKELA (64 aa)).

Belongs to the universal ribosomal protein uS4 family. As to quaternary structure, part of the 30S ribosomal subunit. Contacts protein S5. The interaction surface between S4 and S5 is involved in control of translational fidelity.

In terms of biological role, one of the primary rRNA binding proteins, it binds directly to 16S rRNA where it nucleates assembly of the body of the 30S subunit. Its function is as follows. With S5 and S12 plays an important role in translational accuracy. This is Small ribosomal subunit protein uS4A from Symbiobacterium thermophilum (strain DSM 24528 / JCM 14929 / IAM 14863 / T).